Consider the following 182-residue polypeptide: GTP cyclohydrolase 1 (182 aa).

The Zn(2+) site is built by Cys-73, His-76, and Cys-144.

It belongs to the GTP cyclohydrolase I family. In terms of assembly, homomer.

It catalyses the reaction GTP + H2O = 7,8-dihydroneopterin 3'-triphosphate + formate + H(+). It participates in cofactor biosynthesis; 7,8-dihydroneopterin triphosphate biosynthesis; 7,8-dihydroneopterin triphosphate from GTP: step 1/1. The polypeptide is GTP cyclohydrolase 1 (Hydrogenobaculum sp. (strain Y04AAS1)).